The following is a 128-amino-acid chain: Small ribosomal subunit protein uS12 (128 aa).

At Asp89 the chain carries 3-methylthioaspartic acid. Positions 101–128 (SLDTSGVADRRQGRSKYGAKRPKGAAAK) are disordered. A compositionally biased stretch (basic residues) spans 113 to 128 (GRSKYGAKRPKGAAAK).

Belongs to the universal ribosomal protein uS12 family. In terms of assembly, part of the 30S ribosomal subunit. Contacts proteins S8 and S17. May interact with IF1 in the 30S initiation complex.

Functionally, with S4 and S5 plays an important role in translational accuracy. Its function is as follows. Interacts with and stabilizes bases of the 16S rRNA that are involved in tRNA selection in the A site and with the mRNA backbone. Located at the interface of the 30S and 50S subunits, it traverses the body of the 30S subunit contacting proteins on the other side and probably holding the rRNA structure together. The combined cluster of proteins S8, S12 and S17 appears to hold together the shoulder and platform of the 30S subunit. The chain is Small ribosomal subunit protein uS12 from Prosthecochloris aestuarii (strain DSM 271 / SK 413).